The following is a 202-amino-acid chain: Holliday junction branch migration complex subunit RuvA (202 aa).

The segment at methionine 1–serine 63 is domain I. The segment at threonine 64–serine 142 is domain II. Residues alanine 143–asparagine 153 are flexible linker. Residues asparagine 153–leucine 202 form a domain III region.

This sequence belongs to the RuvA family. As to quaternary structure, homotetramer. Forms an RuvA(8)-RuvB(12)-Holliday junction (HJ) complex. HJ DNA is sandwiched between 2 RuvA tetramers; dsDNA enters through RuvA and exits via RuvB. An RuvB hexamer assembles on each DNA strand where it exits the tetramer. Each RuvB hexamer is contacted by two RuvA subunits (via domain III) on 2 adjacent RuvB subunits; this complex drives branch migration. In the full resolvosome a probable DNA-RuvA(4)-RuvB(12)-RuvC(2) complex forms which resolves the HJ.

The protein localises to the cytoplasm. The RuvA-RuvB-RuvC complex processes Holliday junction (HJ) DNA during genetic recombination and DNA repair, while the RuvA-RuvB complex plays an important role in the rescue of blocked DNA replication forks via replication fork reversal (RFR). RuvA specifically binds to HJ cruciform DNA, conferring on it an open structure. The RuvB hexamer acts as an ATP-dependent pump, pulling dsDNA into and through the RuvAB complex. HJ branch migration allows RuvC to scan DNA until it finds its consensus sequence, where it cleaves and resolves the cruciform DNA. In Porphyromonas gingivalis (strain ATCC BAA-308 / W83), this protein is Holliday junction branch migration complex subunit RuvA.